The sequence spans 71 residues: Small ribosomal subunit protein bS21 (71 aa).

Positions 38–71 are disordered; it reads YEKPTTERKRARASAIKRHAKKLARENARRTRLY. Positions 46-59 are enriched in basic residues; sequence KRARASAIKRHAKK. The span at 60 to 71 shows a compositional bias: basic and acidic residues; it reads LARENARRTRLY.

Belongs to the bacterial ribosomal protein bS21 family.

This is Small ribosomal subunit protein bS21 from Hamiltonella defensa subsp. Acyrthosiphon pisum (strain 5AT).